Reading from the N-terminus, the 334-residue chain is G2/mitotic-specific cyclin-1 (334 aa).

This sequence belongs to the cyclin family. Cyclin AB subfamily.

Functionally, essential for the control of the cell cycle at the G2/M (mitosis) transition. In Trypanosoma brucei brucei, this protein is G2/mitotic-specific cyclin-1 (CYC1).